The following is a 277-amino-acid chain: Hydroxyethylthiazole kinase (277 aa).

M56 is a substrate binding site. Positions 131 and 177 each coordinate ATP. A204 contacts substrate.

This sequence belongs to the Thz kinase family. It depends on Mg(2+) as a cofactor.

It carries out the reaction 5-(2-hydroxyethyl)-4-methylthiazole + ATP = 4-methyl-5-(2-phosphooxyethyl)-thiazole + ADP + H(+). Its pathway is cofactor biosynthesis; thiamine diphosphate biosynthesis; 4-methyl-5-(2-phosphoethyl)-thiazole from 5-(2-hydroxyethyl)-4-methylthiazole: step 1/1. Catalyzes the phosphorylation of the hydroxyl group of 4-methyl-5-beta-hydroxyethylthiazole (THZ). The sequence is that of Hydroxyethylthiazole kinase from Gemmatimonas aurantiaca (strain DSM 14586 / JCM 11422 / NBRC 100505 / T-27).